Here is a 491-residue protein sequence, read N- to C-terminus: Chondroitin proteoglycan 2 (491 aa).

Positions 1–18 (MKTIVALGLLALATAASG) are cleaved as a signal peptide. A Chitin-binding type-2 1 domain is found at 21-78 (LQDCTNALDGLYAIGNCESQFLTCSGGIARIMDCPADLIYNEPLLICDWRHNVVGCEG). The cysteines at positions 54 and 67 are disulfide-linked. Residues 80–126 (GEASGEQSGEGSGEASGEGSGEASGEGSGEASGEGSGSGEGSGEENN) form a disordered region. The span at 87–120 (SGEGSGEASGEGSGEASGEGSGEASGEGSGSGEG) shows a compositional bias: gly residues. The Chitin-binding type-2 2 domain occupies 125-182 (NNVCEGLEDGAYSSGGCTTYYFFCTDNTARFLSCPTPLFYDVATQKCAWKALVEECNG). An intrachain disulfide couples Cys158 to Cys171. The tract at residues 187-217 (DGSGETSGEGSGEASGENSGENSGEGSGEFE) is disordered. Residues Ser197 and Ser201 are each glycosylated (O-linked (Xyl...) (chondroitin sulfate) serine). The segment covering 200–210 (ASGENSGENSG) has biased composition (low complexity). 4 Chitin-binding type-2 domains span residues 217–274 (EPTC…ECHG), 279–334 (APVC…ECQE), 367–423 (ENEC…KCLI), and 436–491 (PFDC…LQCH). Cystine bridges form between Cys250/Cys263 and Cys310/Cys323. The interval 336–367 (SGEESSGEASGEQSGEGSGEASGEASGEASGE) is disordered. A compositionally biased stretch (low complexity) spans 356–367 (ASGEASGEASGE). The cysteines at positions 399 and 412 are disulfide-linked. Asn464 carries N-linked (GlcNAc...) asparagine glycosylation. Cys467 and Cys481 are oxidised to a cystine.

Functionally, required for polar body extrusion during cytokinesis in embryo development. Affects cortical granule size. Shown to have roles in meiotic chromosome segregation, osmotic barrier function and polarization in conjunction with cpg-2. Binds chitin. The protein is Chondroitin proteoglycan 2 of Caenorhabditis briggsae.